The primary structure comprises 291 residues: 33 kDa chaperonin (291 aa).

Intrachain disulfides connect Cys237–Cys239 and Cys270–Cys273.

Belongs to the HSP33 family. Under oxidizing conditions two disulfide bonds are formed involving the reactive cysteines. Under reducing conditions zinc is bound to the reactive cysteines and the protein is inactive.

The protein localises to the cytoplasm. Redox regulated molecular chaperone. Protects both thermally unfolding and oxidatively damaged proteins from irreversible aggregation. Plays an important role in the bacterial defense system toward oxidative stress. The polypeptide is 33 kDa chaperonin (Bacillus mycoides (strain KBAB4) (Bacillus weihenstephanensis)).